Here is a 1336-residue protein sequence, read N- to C-terminus: Mating factor M secretion protein mam1 (1336 aa).

The tract at residues 1 to 29 (MHIHSDLSLPQFEHASIDPPSYSPQKSSF) is disordered. The Cytoplasmic segment spans residues 1–91 (MHIHSDLSLP…ELAGVSSWSD (91 aa)). The chain crosses the membrane as a helical span at residues 92–112 (FFYLFHFSDIPLIFGTLIFTC). One can recognise an ABC transmembrane type-1 1 domain in the interval 104–396 (IFGTLIFTCL…ILPAIPDLIK (293 aa)). Over 113–153 (LSAALEPLMTWTTGKVFDALSQYATSQITLGKMISLINFNS) the chain is Extracellular. A helical transmembrane segment spans residues 154-174 (LLITIFGLASCVFSFGVRFLW). At 175-250 (QYLSAIAGKR…SCLIISFRYS (76 aa)) the chain is on the cytoplasmic side. The helical transmembrane segment at 251–271 (WSLTLVVLASYPIIILVVGFI) threads the bilayer. Residues 272 to 778 (NSFLSSAYEK…KSIWKVKKLR (507 aa)) are Extracellular-facing. Residues 433-668 (FRFDNVSFAY…EDFENNVSID (236 aa)) enclose the ABC transporter 1 domain. Asn437 and Asn454 each carry an N-linked (GlcNAc...) asparagine glycan. 469–476 (GPSGSGKS) contributes to the ATP binding site. Asn536, Asn664, and Asn697 each carry an N-linked (GlcNAc...) asparagine glycan. The helical transmembrane segment at 779-799 (WFFLLGLLTSLIQGASVPIFA) threads the bilayer. The ABC transmembrane type-1 2 domain occupies 781 to 1066 (FLLGLLTSLI…CIMSLPNVSA (286 aa)). The Cytoplasmic segment spans residues 800 to 897 (YVISKCLNLF…ISDMRNMISS (98 aa)). Residues 898-918 (LIEEVFIAFTMAIIGIAWSFA) traverse the membrane as a helical segment. At 919–1336 (TGWRLAAVLV…KLIHRGEWIE (418 aa)) the chain is on the extracellular side. Residues Asn1011, Asn1063, and Asn1120 are each glycosylated (N-linked (GlcNAc...) asparagine). In terms of domain architecture, ABC transporter 2 spans 1099 to 1331 (IEFDGVSFAY…HTHFWKLIHR (233 aa)). Position 1135 to 1142 (1135 to 1142 (GISGSGKS)) interacts with ATP. Asn1235 and Asn1280 each carry an N-linked (GlcNAc...) asparagine glycan.

This sequence belongs to the ABC transporter superfamily. Alpha-factor sex pheromone exporter (TC 3.A.1.206) family.

It is found in the membrane. In terms of biological role, required in S.pombe M (minus) cells for production of M-factor pheromone. Involved in the transport of the farnesyl-derivation of the M-factor pheromone. In Schizosaccharomyces pombe (strain 972 / ATCC 24843) (Fission yeast), this protein is Mating factor M secretion protein mam1 (mam1).